We begin with the raw amino-acid sequence, 311 residues long: Probable manganese-dependent inorganic pyrophosphatase (311 aa).

Mn(2+) contacts are provided by His9, Asp13, Asp15, Asp77, His99, and Asp151.

Belongs to the PPase class C family. Requires Mn(2+) as cofactor.

The protein localises to the cytoplasm. It carries out the reaction diphosphate + H2O = 2 phosphate + H(+). In Streptococcus agalactiae serotype Ia (strain ATCC 27591 / A909 / CDC SS700), this protein is Probable manganese-dependent inorganic pyrophosphatase.